Here is a 204-residue protein sequence, read N- to C-terminus: FMN-dependent NADH:quinone oxidoreductase (204 aa).

FMN contacts are provided by residues S9 and 15-17 (SAS).

The protein belongs to the azoreductase type 1 family. Homodimer. The cofactor is FMN.

It catalyses the reaction 2 a quinone + NADH + H(+) = 2 a 1,4-benzosemiquinone + NAD(+). The enzyme catalyses N,N-dimethyl-1,4-phenylenediamine + anthranilate + 2 NAD(+) = 2-(4-dimethylaminophenyl)diazenylbenzoate + 2 NADH + 2 H(+). In terms of biological role, quinone reductase that provides resistance to thiol-specific stress caused by electrophilic quinones. Functionally, also exhibits azoreductase activity. Catalyzes the reductive cleavage of the azo bond in aromatic azo compounds to the corresponding amines. The chain is FMN-dependent NADH:quinone oxidoreductase from Xanthomonas campestris pv. campestris (strain ATCC 33913 / DSM 3586 / NCPPB 528 / LMG 568 / P 25).